The chain runs to 204 residues: Leucyl/phenylalanyl-tRNA--protein transferase (204 aa).

The protein belongs to the L/F-transferase family.

Its subcellular location is the cytoplasm. The catalysed reaction is N-terminal L-lysyl-[protein] + L-leucyl-tRNA(Leu) = N-terminal L-leucyl-L-lysyl-[protein] + tRNA(Leu) + H(+). It catalyses the reaction N-terminal L-arginyl-[protein] + L-leucyl-tRNA(Leu) = N-terminal L-leucyl-L-arginyl-[protein] + tRNA(Leu) + H(+). It carries out the reaction L-phenylalanyl-tRNA(Phe) + an N-terminal L-alpha-aminoacyl-[protein] = an N-terminal L-phenylalanyl-L-alpha-aminoacyl-[protein] + tRNA(Phe). Functions in the N-end rule pathway of protein degradation where it conjugates Leu, Phe and, less efficiently, Met from aminoacyl-tRNAs to the N-termini of proteins containing an N-terminal arginine or lysine. The sequence is that of Leucyl/phenylalanyl-tRNA--protein transferase from Sinorhizobium medicae (strain WSM419) (Ensifer medicae).